The primary structure comprises 209 residues: GTP-binding protein RHB1 (209 aa).

Methionine 1 bears the N-acetylmethionine mark. Glycine 28, lysine 29, threonine 30, threonine 31, valine 42, tyrosine 45, threonine 48, aspartate 132, and alanine 172 together coordinate GTP. Residue threonine 30 coordinates Mg(2+). The Effector region motif lies at 45-53; sequence YYPTIENEF. Threonine 48 provides a ligand contact to Mg(2+). Cysteine 206 carries the post-translational modification Cysteine methyl ester. The S-farnesyl cysteine moiety is linked to residue cysteine 206. Positions 207-209 are cleaved as a propeptide — removed in mature form; the sequence is SIM.

This sequence belongs to the small GTPase superfamily. Rheb family. As to quaternary structure, interacts with BTN2.

It localises to the cell membrane. The catalysed reaction is GTP + H2O = GDP + phosphate + H(+). Functionally, binds GTP and exhibits intrinsic GTPase activity. Involved in the regulation of arginine and lysine uptake. Acts through the CAN1 permease. This is GTP-binding protein RHB1 (RHB1) from Saccharomyces cerevisiae (strain ATCC 204508 / S288c) (Baker's yeast).